The primary structure comprises 583 residues: Complement factor I (583 aa).

The signal sequence occupies residues 1–18 (MKLLHVFLLFLCFHLSFC). Disulfide bonds link Cys33-Cys255, Cys43-Cys54, Cys48-Cys59, Cys61-Cys93, Cys67-Cys86, Cys75-Cys106, Cys141-Cys181, Cys154-Cys214, Cys186-Cys196, Cys229-Cys247, Cys259-Cys271, Cys266-Cys284, Cys278-Cys293, Cys327-Cys453, Cys365-Cys381, and Cys373-Cys444. The 54-residue stretch at 55–108 (IEGTCICKLPYQCPKNGTTVCATNGRSFPTYCQQKSLECLRPGTKFLNNGTCTA) folds into the Kazal-like domain. N-linked (GlcNAc...) asparagine glycosylation is found at Asn70, Asn103, Asn173, and Asn177. The 99-residue stretch at 114-212 (VSLKHGNTDS…TMGYQDLADV (99 aa)) folds into the SRCR domain. LDL-receptor class A domains are found at residues 213–257 (VCYT…LCCK) and 258–294 (ACQG…VGCE). Residues Lys239, Asp242, Ile244, Asp246, Asp252, and Glu253 each contribute to the Ca(2+) site. Ca(2+) contacts are provided by Tyr276, Asn279, Glu281, Asp283, Asp289, and Glu290. Residues 340-574 (IVGGKRAQLG…YFDWISYHVG (235 aa)) enclose the Peptidase S1 domain. Active-site charge relay system residues include His380 and Asp429. N-linked (GlcNAc...) asparagine glycosylation is found at Asn464 and Asn494. 3 disulfides stabilise this stretch: Cys467–Cys531, Cys495–Cys510, and Cys521–Cys550. The active-site Charge relay system is Ser525. N-linked (GlcNAc...) asparagine glycosylation occurs at Asn536.

This sequence belongs to the peptidase S1 family. In terms of assembly, heterodimer of a light and heavy chains; disulfide-linked. The fully processed and mature protein circulates as a zymogen, and is allosterically activated by substrate-induced remodeling of the active site. In terms of tissue distribution, plasma.

The protein localises to the secreted. It is found in the extracellular space. The enzyme catalyses Inactivates complement subcomponents C3b, iC3b and C4b by proteolytic cleavage.. In terms of biological role, responsible for cleaving the alpha-chains of C4b and C3b in the presence of the cofactors C4-binding protein and factor H respectively. This Pongo abelii (Sumatran orangutan) protein is Complement factor I (CFI).